Reading from the N-terminus, the 315-residue chain is Acetyl-coenzyme A carboxylase carboxyl transferase subunit alpha (315 aa).

Residues 36–289 (LSKKRLELME…RKAVAAELKI (254 aa)) form the CoA carboxyltransferase C-terminal domain.

The protein belongs to the AccA family. In terms of assembly, acetyl-CoA carboxylase is a heterohexamer composed of biotin carboxyl carrier protein (AccB), biotin carboxylase (AccC) and two subunits each of ACCase subunit alpha (AccA) and ACCase subunit beta (AccD).

It localises to the cytoplasm. The catalysed reaction is N(6)-carboxybiotinyl-L-lysyl-[protein] + acetyl-CoA = N(6)-biotinyl-L-lysyl-[protein] + malonyl-CoA. Its pathway is lipid metabolism; malonyl-CoA biosynthesis; malonyl-CoA from acetyl-CoA: step 1/1. Its function is as follows. Component of the acetyl coenzyme A carboxylase (ACC) complex. First, biotin carboxylase catalyzes the carboxylation of biotin on its carrier protein (BCCP) and then the CO(2) group is transferred by the carboxyltransferase to acetyl-CoA to form malonyl-CoA. The chain is Acetyl-coenzyme A carboxylase carboxyl transferase subunit alpha from Francisella tularensis subsp. tularensis (strain FSC 198).